The primary structure comprises 838 residues: pre-rRNA 2'-O-ribose RNA methyltransferase FTSJ3 (838 aa).

Positions 56, 58, 76, 92, and 117 each coordinate S-adenosyl-L-methionine. K157 serves as the catalytic Proton acceptor. The interval 332-367 (ISLSSEEEEEGDEEEAVAETKQAPEEEEEREEEQLN) is disordered. 3 positions are modified to phosphoserine: S333, S335, and S336. The segment covering 336–348 (SEEEEEGDEEEAV) has biased composition (acidic residues). R390 carries the citrulline modification. A disordered region spans residues 453 to 482 (IYVSDAEDDDDTSLESDLDPEELAGVRTHS). Positions 457-474 (DAEDDDDTSLESDLDPEE) are enriched in acidic residues. Residues S532 and S545 each carry the phosphoserine modification. The disordered stretch occupies residues 537-639 (DADEALEISQ…GRGSKADEDG (103 aa)). K571 is covalently cross-linked (Glycyl lysine isopeptide (Lys-Gly) (interchain with G-Cter in SUMO2)). S576 is modified (phosphoserine). Glycyl lysine isopeptide (Lys-Gly) (interchain with G-Cter in SUMO2) cross-links involve residues K634 and K650. Residue S667 is modified to Phosphoserine. A Glycyl lysine isopeptide (Lys-Gly) (interchain with G-Cter in SUMO2) cross-link involves residue K669. S679 bears the Phosphoserine mark. Residue K701 forms a Glycyl lysine isopeptide (Lys-Gly) (interchain with G-Cter in SUMO2) linkage. Positions 730-768 (IKKVAEAKARKKRRVLKKLEQTKKKAEAVVNTVDISERE) form a coiled coil. R774 is subject to Citrulline. Basic residues predominate over residues 802–812 (VRRPAGVKGHF). Residues 802 to 838 (VRRPAGVKGHFKVVDSRMKKDQRAQQRKEQKKKHKRK) form a disordered region. A compositionally biased stretch (basic and acidic residues) spans 813 to 829 (KVVDSRMKKDQRAQQRK).

The protein belongs to the class I-like SAM-binding methyltransferase superfamily. RNA methyltransferase RlmE family. SPB1 subfamily. In terms of assembly, interacts with NIP7. In terms of processing, citrullinated by PADI4.

The protein resides in the nucleus. The protein localises to the nucleolus. It carries out the reaction a ribonucleotide in rRNA + S-adenosyl-L-methionine = a 2'-O-methylribonucleotide in rRNA + S-adenosyl-L-homocysteine + H(+). Its function is as follows. RNA 2'-O-methyltransferase involved in the processing of the 34S pre-rRNA to 18S rRNA and in 40S ribosomal subunit formation. The protein is pre-rRNA 2'-O-ribose RNA methyltransferase FTSJ3 (Ftsj3) of Mus musculus (Mouse).